We begin with the raw amino-acid sequence, 140 residues long: Large ribosomal subunit protein uL11 (140 aa).

It belongs to the universal ribosomal protein uL11 family. In terms of assembly, part of the ribosomal stalk of the 50S ribosomal subunit. Interacts with L10 and the large rRNA to form the base of the stalk. L10 forms an elongated spine to which L12 dimers bind in a sequential fashion forming a multimeric L10(L12)X complex. In terms of processing, one or more lysine residues are methylated.

Its function is as follows. Forms part of the ribosomal stalk which helps the ribosome interact with GTP-bound translation factors. In Solidesulfovibrio magneticus (strain ATCC 700980 / DSM 13731 / RS-1) (Desulfovibrio magneticus), this protein is Large ribosomal subunit protein uL11.